We begin with the raw amino-acid sequence, 358 residues long: D-xylulose reductase A (358 aa).

3 residues coordinate Zn(2+): C47, H72, and E73. 182–187 serves as a coordination point for NAD(+); that stretch reads GAGPVG.

It belongs to the zinc-containing alcohol dehydrogenase family. Zn(2+) is required as a cofactor.

The enzyme catalyses xylitol + NAD(+) = D-xylulose + NADH + H(+). It functions in the pathway carbohydrate degradation; L-arabinose degradation via L-arabinitol; D-xylulose 5-phosphate from L-arabinose (fungal route): step 4/5. Its function is as follows. Xylitol dehydrogenase which catalyzes the conversion of xylitol to D-xylulose. Xylose is a major component of hemicelluloses such as xylan. Most fungi utilize D-xylose via three enzymatic reactions, xylose reductase (XR), xylitol dehydrogenase (XDH), and xylulokinase, to form xylulose 5-phosphate, which enters pentose phosphate pathway. The protein is D-xylulose reductase A (xdhA) of Aspergillus oryzae (strain ATCC 42149 / RIB 40) (Yellow koji mold).